We begin with the raw amino-acid sequence, 706 residues long: MKFIHLAMTLAYSLPHIVDAFSTLSHQRIRTSNVGVSSIFTNSQRITTFSATPTTRRTTSLFSTTENKKSSELVSNQDLGLGTSGFSTSRIRNFSIIAHIDHGKSTLADRLLESTQTVAARDMAAQLLDNMDLERERGITIKLQAARVLYKSEVDGEMYILNLIDTPGHVDFSYEVSRSLAACEGALLVVDASQGVEAQTLANVYLALENNLEIIPVLNKIDLPAADPDRVAEEIEETIGIDCSDAVRASAKSGIGINDILESIVKNVPPPQPDTGGPFRALIFDSLFDPYRGVIVFFRVVDGAVKKGQKVRFLASKAEHDVTEVGIMQPNQVQVDCLRAGEVGYLCGSIKDVLDARVGDTITLSSEYKAAAAKLDPKSEEDPITPLPGYSESIPMVYCGIFPVDADQYENLRDALGKLRLNDAAISYEPETSGAMGFGFRCGFLGLLHMDVIRERLEREFDLDLIVTAPSVVYRVEKGEGDSKTVEIVDAPSKMPEILREMKVMEPYVRMEILTPSEYNGQIIELGQERRGILKDINYLTPTRSTIVYEVPLAEVITDFFDQLKSRTQGYASMEYQLIEYREGDLVRLDVKINYEDAPPLATIVHVDAAQTVGRRLVASLKELIPRQMFKVPIQACIGVKVIASASISPMRKDVLAKCYGGDLSRKKKLLQKQAKGKKRMKAMGKVNVPQEAFMAVIKLNKSAGD.

Residues 89–272 form the tr-type G domain; the sequence is SRIRNFSIIA…SIVKNVPPPQ (184 aa). GTP is bound by residues 98–105, 165–169, and 219–222; these read AHIDHGKS, DTPGH, and NKID.

It belongs to the TRAFAC class translation factor GTPase superfamily. Classic translation factor GTPase family. LepA subfamily.

It localises to the mitochondrion inner membrane. It catalyses the reaction GTP + H2O = GDP + phosphate + H(+). Functionally, promotes mitochondrial protein synthesis. May act as a fidelity factor of the translation reaction, by catalyzing a one-codon backward translocation of tRNAs on improperly translocated ribosomes. Binds to mitochondrial ribosomes in a GTP-dependent manner. In Thalassiosira pseudonana (Marine diatom), this protein is Translation factor GUF1 homolog, mitochondrial.